A 76-amino-acid polypeptide reads, in one-letter code: Conotoxin Ca11b (76 aa).

A signal peptide spans 1 to 19; it reads MKLVLAIVVILMLLSLSTG. The propeptide occupies 20 to 42; that stretch reads AEMSDNHASMSANALRDRLLGPK. 4 disulfide bridges follow: C46/C60, C53/C65, C59/C69, and C64/C76.

In terms of tissue distribution, expressed by the venom duct.

The protein localises to the secreted. This chain is Conotoxin Ca11b, found in Conus caracteristicus (Characteristic cone).